Reading from the N-terminus, the 590-residue chain is Acetolactate synthase large subunit (590 aa).

E61 serves as a coordination point for thiamine diphosphate. Residues R163, 271 to 292, and 314 to 333 contribute to the FAD site; these read HGTAYANFAVSECDLLIALGAR and DIDPAEVGKNRIPQVAIVGD. The segment at 405–484 is thiamine pyrophosphate binding; the sequence is QHQMWSAQFL…VKIIIINNRW (80 aa). Mg(2+)-binding residues include D455 and N482.

This sequence belongs to the TPP enzyme family. Dimer of large and small chains. The cofactor is Mg(2+). Thiamine diphosphate serves as cofactor.

The protein localises to the plastid. It is found in the chloroplast. It carries out the reaction 2 pyruvate + H(+) = (2S)-2-acetolactate + CO2. It functions in the pathway amino-acid biosynthesis; L-isoleucine biosynthesis; L-isoleucine from 2-oxobutanoate: step 1/4. The protein operates within amino-acid biosynthesis; L-valine biosynthesis; L-valine from pyruvate: step 1/4. The protein is Acetolactate synthase large subunit (ilvB) of Pyropia yezoensis (Susabi-nori).